Here is a 205-residue protein sequence, read N- to C-terminus: N-(5'-phosphoribosyl)anthranilate isomerase (205 aa).

The protein belongs to the TrpF family.

The enzyme catalyses N-(5-phospho-beta-D-ribosyl)anthranilate = 1-(2-carboxyphenylamino)-1-deoxy-D-ribulose 5-phosphate. It participates in amino-acid biosynthesis; L-tryptophan biosynthesis; L-tryptophan from chorismate: step 3/5. This chain is N-(5'-phosphoribosyl)anthranilate isomerase, found in Thiobacillus denitrificans (strain ATCC 25259 / T1).